Here is a 488-residue protein sequence, read N- to C-terminus: RNA binding exosome specificity factor Mmi1 (488 aa).

Polar residues-rich tracts occupy residues 1–14 (MSNTNFSTSRSSKS), 33–47 (LNESGDTRSVWTTHT), and 54–66 (SVLSTSGSNNFSS). Disordered regions lie at residues 1-20 (MSNTNFSTSRSSKSIPELPN) and 25-80 (RSLW…DAPI). The span at 71–80 (PAPESHDAPI) shows a compositional bias: basic and acidic residues. Positions 95 to 122 (GKYDFSRHCTDYGHSYEWPYFRSLRRES) are interaction with erh1. Disordered stretches follow at residues 163-185 (SRLHGIQPPPKRRTLSPPPRRLA) and 225-261 (SYPVRSSPQLSHEDTRHGIASSGSTRYPFVPANTRAS). At T176 the chain carries Phosphothreonine. Phosphoserine occurs at positions 178, 230, 231, 261, 263, and 265. Over residues 289–299 (SYLLSNSSNDS) the composition is skewed to low complexity. Positions 289-328 (SYLLSNSSNDSASRKEKPKARASTPPPLNFSRASEHRNEK) are disordered. S311 is modified (phosphoserine). T312 carries the phosphothreonine modification. Residues 350–476 (SRYFIMLCDN…DEGSRLCTLI (127 aa)) form the YTH domain.

As to quaternary structure, component of the erh1-mmi1 complex composed of mmi1 and erh1. Interacts (via N-terminus) with erh1 in a 2:2 stoichiometry. Interacts with rrp6.

It is found in the nucleus. Functionally, RNA-binding protein that recognizes and binds N6-methyladenosine (m6A)-containing RNAs, a modification present at internal sites of mRNAs and some non-coding RNAs. Functions alone and as part of the erh1-mmi1 complex, to recruit the CCR4-NOT complex and the NURS complex to target RNAs. Suppresses the meiotic program during vegetative growth and promotes the meiotic program during mating. Binds to DSR (determinant of selective removal) regions in meiotic mRNA, and recruits the NURS complex to targets. Recruitment of NURS complex to target mRNAs promotes mRNA decay by engagement of the nuclear exosome, and formation of heterochromatin islands at meiotic genes silenced by the exosome. Recruitment of the CCR4-NOT complex to target RNAs promotes heterochromatin formation at RNAi-dependent heterochromatin domains (HOODs), including a subset of meiotic genes, lncRNAs and retrotransposons. Recruitment of the CCR4-NOT complex to rDNA promotes rDNA heterochromatin assembly. Promotes non-canonical transcription termination at meiotic genes and prevents lncRNA transcription from invading and repressing adjacent genes. This is RNA binding exosome specificity factor Mmi1 (mmi1) from Schizosaccharomyces pombe (strain 972 / ATCC 24843) (Fission yeast).